A 484-amino-acid polypeptide reads, in one-letter code: UDP-N-acetylmuramoyl-L-alanyl-D-glutamate--L-lysine ligase (484 aa).

Ser-43 lines the UDP-N-acetyl-alpha-D-muramoyl-L-alanyl-D-glutamate pocket. Position 119–125 (119–125) interacts with ATP; it reads GTKGKTT. UDP-N-acetyl-alpha-D-muramoyl-L-alanyl-D-glutamate-binding positions include 161 to 162, Ser-188, and Arg-196; that span reads TT. The residue at position 230 (Lys-230) is an N6-carboxylysine. The short motif at 405-408 is the L-lysine recognition motif element; sequence DDPN.

The protein belongs to the MurCDEF family. MurE subfamily. Carboxylation is probably crucial for Mg(2+) binding and, consequently, for the gamma-phosphate positioning of ATP.

It is found in the cytoplasm. It catalyses the reaction UDP-N-acetyl-alpha-D-muramoyl-L-alanyl-D-glutamate + L-lysine + ATP = UDP-N-acetyl-alpha-D-muramoyl-L-alanyl-gamma-D-glutamyl-L-lysine + ADP + phosphate + H(+). It participates in cell wall biogenesis; peptidoglycan biosynthesis. Its function is as follows. Catalyzes the addition of L-lysine to the nucleotide precursor UDP-N-acetylmuramoyl-L-alanyl-D-glutamate (UMAG) in the biosynthesis of bacterial cell-wall peptidoglycan. The sequence is that of UDP-N-acetylmuramoyl-L-alanyl-D-glutamate--L-lysine ligase from Streptococcus agalactiae serotype V (strain ATCC BAA-611 / 2603 V/R).